Consider the following 238-residue polypeptide: Zinc-finger homeodomain protein 11 (238 aa).

The ZF-HD dimerization-type; degenerate zinc finger occupies Y12–D59. The segment at residues R119–G188 is a DNA-binding region (homeobox). Residues G183 to A200 are compositionally biased toward gly residues. Residues G183–M238 are disordered.

In terms of assembly, homo- and heterodimer with other ZFHD proteins.

The protein localises to the nucleus. Its function is as follows. Putative transcription factor. The polypeptide is Zinc-finger homeodomain protein 11 (ZHD11) (Oryza sativa subsp. indica (Rice)).